The sequence spans 715 residues: Fatty acid oxidation complex subunit alpha (715 aa).

Residues 1 to 190 are enoyl-CoA hydratase; that stretch reads MTTTSAFMLN…KAGLVDDVVP (190 aa). Positions 306-715 are 3-hydroxyacyl-CoA dehydrogenase; it reads GPLNSVGILG…WTNGETDQGN (410 aa).

It in the N-terminal section; belongs to the enoyl-CoA hydratase/isomerase family. In the central section; belongs to the 3-hydroxyacyl-CoA dehydrogenase family. As to quaternary structure, heterotetramer of two alpha chains (FadJ) and two beta chains (FadI).

It is found in the cytoplasm. It catalyses the reaction a (3S)-3-hydroxyacyl-CoA = a (2E)-enoyl-CoA + H2O. The catalysed reaction is a 4-saturated-(3S)-3-hydroxyacyl-CoA = a (3E)-enoyl-CoA + H2O. The enzyme catalyses a (3S)-3-hydroxyacyl-CoA + NAD(+) = a 3-oxoacyl-CoA + NADH + H(+). It carries out the reaction (3S)-3-hydroxybutanoyl-CoA = (3R)-3-hydroxybutanoyl-CoA. It participates in lipid metabolism; fatty acid beta-oxidation. Functionally, catalyzes the formation of a hydroxyacyl-CoA by addition of water on enoyl-CoA. Also exhibits 3-hydroxyacyl-CoA epimerase and 3-hydroxyacyl-CoA dehydrogenase activities. The protein is Fatty acid oxidation complex subunit alpha of Salmonella agona (strain SL483).